The chain runs to 3660 residues: Dystrophin (3660 aa).

The actin-binding stretch occupies residues 1-244 (MSAHVLWYEE…YVTSLFQVLP (244 aa)). Calponin-homology (CH) domains are found at residues 19-123 (DVQK…LHWQ) and 138-244 (TNSE…QVLP). 22 Spectrin repeats span residues 341-449 (MDLD…NLHK), 450-558 (ILMD…LLQD), 561-669 (RKWQ…QVSQ), 721-830 (EIRK…WLEY), 832-936 (NSII…QLQT), 945-1047 (RYKD…KLED), 1050-1156 (TKLQ…ALKG), 1159-1265 (DKTV…TLEE), 1268-1369 (ACWH…SLEQ), 1470-1570 (EQRL…ELEK), 1573-1678 (KLSR…LLME), 1681-1782 (KHME…FIPL), 1879-1981 (HQWY…TVLE), 2013-2103 (LSEV…RFDK), 2106-2211 (EKWR…RIEE), 2214-2321 (NILS…EIEI), 2472-2574 (FNKA…QLHE), 2577-2683 (KDST…ALES), 2686-2799 (LMLQ…HLEA), 2802-2904 (DQWK…LRRQ), 2906-2928 (DDVRTEWDKLNLRSADWQKKIDD), and 2931-3037 (ERLQ…QLHE). The 34-residue stretch at 3052 to 3085 (TSVQGPWERAISPNKVPYYINHETQTTCWDHPKM) folds into the WW domain. A ZZ-type; degenerate zinc finger spans residues 3305 to 3361 (KHQAKCNICKECPIIGFRYRSLKHFNYDICQSCFFSGRVAKGHKMHYPMVEYCTPTT). The Zn(2+) site is built by Cys-3310, Cys-3313, Cys-3334, and Cys-3337. 2 disordered regions span residues 3503–3526 (KQQHDHKGLSPLPSPPEMMPVSPQ) and 3575–3660 (PQAD…EATM). Polar residues-rich tracts occupy residues 3582–3601 (NGTTLSSPSTSLQRSDSSQP) and 3637–3647 (QLNNSFPSSRG).

The protein localises to the cell membrane. Its subcellular location is the sarcolemma. It is found in the cytoplasm. The protein resides in the cytoskeleton. It localises to the postsynaptic cell membrane. Its function is as follows. May play a role in anchoring the cytoskeleton to the plasma membrane. The sequence is that of Dystrophin (DMD) from Gallus gallus (Chicken).